The sequence spans 158 residues: Sec-independent protein translocase protein TatB (158 aa).

Residues 1–21 (MFDIGWSELLVIGVVALVVVG) traverse the membrane as a helical segment. Residues 73-158 (RSMGLDAMKQ…PAPAEPKSNA (86 aa)) form a disordered region. Residues 83-92 (AADRFEKWDP) show a composition bias toward basic and acidic residues. Composition is skewed to low complexity over residues 94–132 (KPQQ…SEPA) and 138–158 (APAA…KSNA).

The protein belongs to the TatB family. As to quaternary structure, the Tat system comprises two distinct complexes: a TatABC complex, containing multiple copies of TatA, TatB and TatC subunits, and a separate TatA complex, containing only TatA subunits. Substrates initially bind to the TatABC complex, which probably triggers association of the separate TatA complex to form the active translocon.

It localises to the cell inner membrane. Its function is as follows. Part of the twin-arginine translocation (Tat) system that transports large folded proteins containing a characteristic twin-arginine motif in their signal peptide across membranes. Together with TatC, TatB is part of a receptor directly interacting with Tat signal peptides. TatB may form an oligomeric binding site that transiently accommodates folded Tat precursor proteins before their translocation. In Cereibacter sphaeroides (strain ATCC 17029 / ATH 2.4.9) (Rhodobacter sphaeroides), this protein is Sec-independent protein translocase protein TatB.